Consider the following 601-residue polypeptide: NADPH--cytochrome P450 reductase (601 aa).

The 145-residue stretch at 25–169 (IVVFYGSQTG…DFVTWREQFW (145 aa)) folds into the Flavodoxin-like domain. Residues 31-36 (SQTGTG), 83-86 (ATYG), 118-127 (LGDKTYEHYN), and Asp153 contribute to the FMN site. One can recognise an FAD-binding FR-type domain in the interval 224-425 (KNPFLAPVTV…ICAVLVEYXT (202 aa)). FAD-binding positions include 399-402 (RYYS), 417-419 (CAV), Tyr423, and 427-430 (GVAT). NADP(+) is bound by residues Thr458, 519–520 (SR), 525–529 (KVYVQ), and Asp562. Trp600 is a binding site for FAD.

This sequence belongs to the NADPH--cytochrome P450 reductase family. In the N-terminal section; belongs to the flavodoxin family. The protein in the C-terminal section; belongs to the flavoprotein pyridine nucleotide cytochrome reductase family. FAD is required as a cofactor. Requires FMN as cofactor.

It is found in the endoplasmic reticulum membrane. It carries out the reaction 2 oxidized [cytochrome P450] + NADPH = 2 reduced [cytochrome P450] + NADP(+) + H(+). Functionally, this enzyme is required for electron transfer from NADP to cytochrome P450 in microsomes. It can also provide electron transfer to heme oxygenase and cytochrome B5. The sequence is that of NADPH--cytochrome P450 reductase from Salmo trutta (Brown trout).